We begin with the raw amino-acid sequence, 112 residues long: ATP synthase epsilon chain (112 aa).

The protein belongs to the ATPase epsilon chain family. F-type ATPases have 2 components, CF(1) - the catalytic core - and CF(0) - the membrane proton channel. CF(1) has five subunits: alpha(3), beta(3), gamma(1), delta(1), epsilon(1). CF(0) has three main subunits: a, b and c.

Its subcellular location is the cell inner membrane. Its function is as follows. Produces ATP from ADP in the presence of a proton gradient across the membrane. This Rickettsia prowazekii (strain Madrid E) protein is ATP synthase epsilon chain (atpC).